The following is a 316-amino-acid chain: MTSAPLAARLTVPSGPLFFPVTAYGPDGGLDLDVYRTHVRRGVEAGAAAVFACCGTGEFHALTPEEFAACVRAAVEESAGRVPVLAGAGYGTALAVRYARLAEQAGADGLLAMPPYLVLAGQEGLVRHYREVAAATPLPVIVYQRDNAVFTPESVVELARTDGVVGLKDGLGDLDLMQRIVSAVRTELPGEEFLYFNGLPTAEQTQLSYRALGVPLYSSAVFCFAPEIAVAFHRALREGDDATVHRLLDGFYRPFVELRARGRGYAVALVKAGVRLRGLDVGEVRTPLQEPAEEHVKQLVQIIERGQVLVEEGAGR.

This sequence belongs to the DapA family.

It catalyses the reaction 5-dehydro-4-deoxy-D-glucarate + H(+) = 2,5-dioxopentanoate + CO2 + H2O. Its pathway is carbohydrate acid metabolism; D-glucarate degradation; 2,5-dioxopentanoate from D-glucarate: step 2/2. In Streptomyces coelicolor (strain ATCC BAA-471 / A3(2) / M145), this protein is Probable 5-dehydro-4-deoxyglucarate dehydratase 1.